The primary structure comprises 274 residues: tRNA (guanine-N(1)-)-methyltransferase (274 aa).

Residues Gly116 and 140–145 (LGDYVL) each bind S-adenosyl-L-methionine.

It belongs to the RNA methyltransferase TrmD family. As to quaternary structure, homodimer.

Its subcellular location is the cytoplasm. It catalyses the reaction guanosine(37) in tRNA + S-adenosyl-L-methionine = N(1)-methylguanosine(37) in tRNA + S-adenosyl-L-homocysteine + H(+). Functionally, specifically methylates guanosine-37 in various tRNAs. In Arthrobacter sp. (strain FB24), this protein is tRNA (guanine-N(1)-)-methyltransferase.